The chain runs to 880 residues: Interference hedgehog (880 aa).

An N-terminal signal peptide occupies residues 1 to 20; that stretch reads MTLLTSSLLLFSLLTSRLEA. At 21-703 the chain is on the extracellular side; it reads IPVLEKSPAH…ETFNMSPMLT (683 aa). Ig-like C2-type domains follow at residues 45 to 142, 155 to 232, 252 to 340, and 346 to 432; these read PGVR…TARL, PESP…ERIQ, PHLL…YIKV, and PQIV…LQVN. Cystine bridges form between cysteine 68-cysteine 126, cysteine 173-cysteine 220, cysteine 276-cysteine 324, and cysteine 367-cysteine 414. Residues asparagine 102 and asparagine 209 are each glycosylated (N-linked (GlcNAc...) asparagine). The tract at residues 429 to 467 is disordered; it reads LQVNPKQIQEPRESGGTHRPNPNQGSKHKQMYPPTPPNV. Fibronectin type-III domains lie at 461–567 and 575–670; these read PPTP…LQPG and VPEL…TQRP. Asparagine 466 carries an N-linked (GlcNAc...) asparagine glycan. The heparin site is built by arginine 497, lysine 501, lysine 503, and arginine 541. Asparagine 557 is a glycosylation site (N-linked (GlcNAc...) asparagine). Residues 662–692 form a disordered region; the sequence is LKQGRTQRPKTSTTEEPTLQMGDRDTTTPSH. A compositionally biased stretch (polar residues) spans 665-678; that stretch reads GRTQRPKTSTTEEP. N-linked (GlcNAc...) asparagine glycosylation is present at asparagine 693. Residues 704 to 724 form a helical membrane-spanning segment; sequence GTIGGGAVLILLLISTCLCVC. Topologically, residues 725–880 are cytoplasmic; that stretch reads RRRNSRSRGN…SSGSLNSVGV (156 aa). Disordered stretches follow at residues 728 to 762 and 775 to 880; these read NSRSRGNNPNKPRMAELRDDFVPLGNCSPTKQRQR and QQQQ…SVGV. Low complexity-rich tracts occupy residues 823–837 and 864–880; these read RAGGSNGSNNGNNNN and SSRSENLSSGSLNSVGV.

The protein belongs to the immunoglobulin superfamily. IHOG family. Homodimer. Heterotetramer; 2 iHog chains bind 2 hh chains when facilitated by heparin, heparin is required to promote high-affinity interactions between hh and iHog.

It localises to the membrane. Mediates response to the active Hedgehog (Hh) protein signal in embryos, functioning upstream or at the level of patched (ptc). This chain is Interference hedgehog, found in Drosophila simulans (Fruit fly).